Reading from the N-terminus, the 391-residue chain is Phosphoglycerate kinase (391 aa).

Substrate contacts are provided by residues D21–N23, R36, H59–R62, R113, and R146. ATP is bound by residues K197, E319, and G345–T348.

Belongs to the phosphoglycerate kinase family. Monomer.

Its subcellular location is the cytoplasm. It carries out the reaction (2R)-3-phosphoglycerate + ATP = (2R)-3-phospho-glyceroyl phosphate + ADP. It participates in carbohydrate degradation; glycolysis; pyruvate from D-glyceraldehyde 3-phosphate: step 2/5. In Shewanella sp. (strain MR-7), this protein is Phosphoglycerate kinase.